The following is a 165-amino-acid chain: 3-isopropylmalate dehydratase small subunit (165 aa).

The protein belongs to the LeuD family. LeuD type 2 subfamily. As to quaternary structure, heterodimer of LeuC and LeuD.

It catalyses the reaction (2R,3S)-3-isopropylmalate = (2S)-2-isopropylmalate. The protein operates within amino-acid biosynthesis; L-leucine biosynthesis; L-leucine from 3-methyl-2-oxobutanoate: step 2/4. In terms of biological role, catalyzes the isomerization between 2-isopropylmalate and 3-isopropylmalate, via the formation of 2-isopropylmaleate. The sequence is that of 3-isopropylmalate dehydratase small subunit from Saccharolobus islandicus (strain Y.G.57.14 / Yellowstone #1) (Sulfolobus islandicus).